The chain runs to 121 residues: Large ribosomal subunit protein uL18 (121 aa).

This sequence belongs to the universal ribosomal protein uL18 family. Part of the 50S ribosomal subunit; part of the 5S rRNA/L5/L18/L25 subcomplex. Contacts the 5S and 23S rRNAs.

This is one of the proteins that bind and probably mediate the attachment of the 5S RNA into the large ribosomal subunit, where it forms part of the central protuberance. In Streptococcus equi subsp. zooepidemicus (strain MGCS10565), this protein is Large ribosomal subunit protein uL18.